The sequence spans 351 residues: Histidine protein kinase SaeS (351 aa).

Helical transmembrane passes span 9 to 29 (IIIGVVSSILLTSTILAIAYI) and 40 to 60 (TLTLTTIITSCLTLLICSIFI). One can recognise an HAMP domain in the interval 61-114 (NPLIQKIKQFNIKTKQFANGNYASNDKTFNSPKEIYELNQSFNKMASEITQQMN). The Histidine kinase domain maps to 129-348 (NLAHDLKTPL…TMTVTLHKLD (220 aa)). Histidine 132 carries the post-translational modification Phosphohistidine; by autocatalysis.

In terms of processing, autophosphorylated.

The protein resides in the cell membrane. The catalysed reaction is ATP + protein L-histidine = ADP + protein N-phospho-L-histidine.. Member of the two-component regulatory system SaeR/SaeS involved in the regulation of staphylococcal virulence factors in a strain-dependent fashion. Probably functions as a membrane-associated protein kinase that upon sensing the appropriate signal, autophosphorylates and in turn activates the cytosolic response regulator SaeR. The protein is Histidine protein kinase SaeS (saeS) of Staphylococcus aureus (strain bovine RF122 / ET3-1).